A 342-amino-acid polypeptide reads, in one-letter code: uncharacterized protein (342 aa).

This is an uncharacterized protein from Acanthamoeba polyphaga (Amoeba).